We begin with the raw amino-acid sequence, 257 residues long: 1-(5-phosphoribosyl)-5-[(5-phosphoribosylamino)methylideneamino] imidazole-4-carboxamide isomerase (257 aa).

The active-site Proton acceptor is the Asp-8. Asp-129 serves as the catalytic Proton donor.

It belongs to the HisA/HisF family.

Its subcellular location is the cytoplasm. The catalysed reaction is 1-(5-phospho-beta-D-ribosyl)-5-[(5-phospho-beta-D-ribosylamino)methylideneamino]imidazole-4-carboxamide = 5-[(5-phospho-1-deoxy-D-ribulos-1-ylimino)methylamino]-1-(5-phospho-beta-D-ribosyl)imidazole-4-carboxamide. It participates in amino-acid biosynthesis; L-histidine biosynthesis; L-histidine from 5-phospho-alpha-D-ribose 1-diphosphate: step 4/9. The polypeptide is 1-(5-phosphoribosyl)-5-[(5-phosphoribosylamino)methylideneamino] imidazole-4-carboxamide isomerase (Acaryochloris marina (strain MBIC 11017)).